The following is a 427-amino-acid chain: Protein TolB homolog (427 aa).

The N-terminal stretch at 1–20 is a signal peptide; the sequence is MLRRIFVSTFLVFGIVSLYA.

It belongs to the TolB family.

It localises to the periplasm. In Chlamydia caviae (strain ATCC VR-813 / DSM 19441 / 03DC25 / GPIC) (Chlamydophila caviae), this protein is Protein TolB homolog.